A 294-amino-acid polypeptide reads, in one-letter code: Probable 2-(5''-triphosphoribosyl)-3'-dephosphocoenzyme-A synthase (294 aa).

It belongs to the CitG/MdcB family.

It catalyses the reaction 3'-dephospho-CoA + ATP = 2'-(5''-triphospho-alpha-D-ribosyl)-3'-dephospho-CoA + adenine. The chain is Probable 2-(5''-triphosphoribosyl)-3'-dephosphocoenzyme-A synthase from Streptococcus equi subsp. equi (strain 4047).